Here is a 604-residue protein sequence, read N- to C-terminus: Nuclear cap-binding protein subunit 3 (604 aa).

A disordered region spans residues 1-36; the sequence is MAAVRGLRISVKAEATATTAEPRGPEPEPMEVEEGE. The tract at residues 116 to 177 is RNA recognition motif (RRM) domain; the sequence is DTIYICGVDE…MSSFPDQEKP (62 aa). A WLDD motif; essential for 7-methylguanosine-containing mRNA cap binding motif is present at residues 145-148; it reads WLDD. Disordered stretches follow at residues 168–219, 319–383, and 457–604; these read MSSF…DIEL, KHRH…DSDE, and QNNN…DTES. Over residues 173–198 the composition is skewed to basic and acidic residues; sequence DQEKPKGGENNEEKTAEKNKKEKQEE. 2 stretches are compositionally biased toward acidic residues: residues 199–219 and 331–349; these read STDDETEEGEVEDENPSDIEL and EPIEEEEEEEEVQDMDEDD. Basic and acidic residues predominate over residues 350-370; sequence RVVVEYRDDLQPFKQSRDRGA. A compositionally biased stretch (polar residues) spans 458–469; that stretch reads NNNGLRQPNSIV. Composition is skewed to basic and acidic residues over residues 495–505, 539–548, and 569–582; these read PRREPISDVHS, TQEKTSDKPE, and IKEKGESRQKKSRL. Residues 595-604 are compositionally biased toward low complexity; sequence ESSSGSDTES.

It belongs to the NCBP3 family. As to quaternary structure, component of an alternative cap-binding complex (CBC) composed of NCBP1/CBP80 and NCBP3.

It is found in the nucleus. Its subcellular location is the cytoplasm. Associates with NCBP1/CBP80 to form an alternative cap-binding complex (CBC) which plays a key role in mRNA export. NCBP3 serves as adapter protein linking the capped RNAs (m7GpppG-capped RNA) to NCBP1/CBP80. Unlike the conventional CBC with NCBP2 which binds both small nuclear RNA (snRNA) and messenger (mRNA) and is involved in their export from the nucleus, the alternative CBC with NCBP3 does not bind snRNA and associates only with mRNA thereby playing a role in only mRNA export. This chain is Nuclear cap-binding protein subunit 3, found in Gallus gallus (Chicken).